Reading from the N-terminus, the 432-residue chain is Adenylosuccinate synthetase (432 aa).

GTP contacts are provided by residues 12-18 and 40-42; these read GDEGKGK and GHT. The Proton acceptor role is filled by Asp-13. Mg(2+)-binding residues include Asp-13 and Gly-40. Residues 13–16, 38–41, Thr-132, Arg-146, Gln-226, Thr-241, and Arg-305 each bind IMP; these read DEGK and NAGH. Catalysis depends on His-41, which acts as the Proton donor. Residue 301-307 participates in substrate binding; sequence TVTGRKR. GTP is bound by residues Arg-307, 333-335, and 415-417; these read KLD and STS.

It belongs to the adenylosuccinate synthetase family. In terms of assembly, homodimer. Mg(2+) is required as a cofactor.

Its subcellular location is the cytoplasm. The enzyme catalyses IMP + L-aspartate + GTP = N(6)-(1,2-dicarboxyethyl)-AMP + GDP + phosphate + 2 H(+). Its pathway is purine metabolism; AMP biosynthesis via de novo pathway; AMP from IMP: step 1/2. In terms of biological role, plays an important role in the de novo pathway of purine nucleotide biosynthesis. Catalyzes the first committed step in the biosynthesis of AMP from IMP. The protein is Adenylosuccinate synthetase of Sinorhizobium fredii (strain NBRC 101917 / NGR234).